Consider the following 160-residue polypeptide: Large ribosomal subunit protein eL21 (160 aa).

This sequence belongs to the eukaryotic ribosomal protein eL21 family. In terms of assembly, component of the large ribosomal subunit. Mature ribosomes consist of a small (40S) and a large (60S) subunit. The 40S subunit contains about 32 different proteins and 1 molecule of RNA (18S). The 60S subunit contains 45 different proteins and 3 molecules of RNA (25S, 5.8S and 5S).

The protein localises to the cytoplasm. Component of the ribosome, a large ribonucleoprotein complex responsible for the synthesis of proteins in the cell. The small ribosomal subunit (SSU) binds messenger RNAs (mRNAs) and translates the encoded message by selecting cognate aminoacyl-transfer RNA (tRNA) molecules. The large subunit (LSU) contains the ribosomal catalytic site termed the peptidyl transferase center (PTC), which catalyzes the formation of peptide bonds, thereby polymerizing the amino acids delivered by tRNAs into a polypeptide chain. The nascent polypeptides leave the ribosome through a tunnel in the LSU and interact with protein factors that function in enzymatic processing, targeting, and the membrane insertion of nascent chains at the exit of the ribosomal tunnel. The sequence is that of Large ribosomal subunit protein eL21 from Candida albicans (strain SC5314 / ATCC MYA-2876) (Yeast).